Consider the following 1346-residue polypeptide: Proline-rich protein 36 (1346 aa).

Disordered regions lie at residues 1-403, 426-512, 537-606, 633-679, 711-1155, and 1168-1240; these read MDNK…TQLI, SVSS…QATP, PLTT…PSPL, PRQT…VSPL, LETQ…AELA, and PPLA…RSPK. Low complexity predominate over residues 10–26; sequence AGAAARTPAARAPGLLT. Residues 27 to 40 are compositionally biased toward pro residues; the sequence is PRPPGSPRPPPPVT. Low complexity-rich tracts occupy residues 41–55 and 86–97; these read PAALRVLGAAGAVGR and SSRNPASRPPAS. Residues 137 to 152 are compositionally biased toward basic and acidic residues; sequence SAEETVARGKATEAPK. Residues 165 to 177 show a composition bias toward low complexity; the sequence is SGPTPGTPSPAMA. The span at 191–203 shows a compositional bias: pro residues; sequence RPAPSARPRPPTE. Residues 208-220 are compositionally biased toward polar residues; sequence SVSSASEHSTTEP. Composition is skewed to low complexity over residues 235-255 and 293-312; these read QRPASRSLSSSATPLSSPARS and APALGPLSSSPLATPSPSGT. Pro residues-rich tracts occupy residues 329–343, 371–380, and 387–397; these read ATLPPSPPVTPPPPA, PLAPPSPSAP, and PSPPATPPSQV. Positions 426-464 are enriched in low complexity; the sequence is SVSSPLQSMPPTQANPALPSLPTLLSPLATPPLSAMSPL. A compositionally biased stretch (pro residues) spans 494–506; it reads TPPPQASPSPSPP. Low complexity predominate over residues 546 to 558; that stretch reads PPLVSPSLLASPP. Over residues 559–578 the composition is skewed to pro residues; the sequence is LQAPPHPQAPPSMTTPPMQA. The segment covering 633 to 647 has biased composition (polar residues); that stretch reads PRQTQASLISPSRPA. Pro residues predominate over residues 648 to 657; the sequence is STPPDSPPLQ. Positions 658-679 are enriched in low complexity; the sequence is APLSLPASPPLQTSLSPAVSPL. The segment covering 724 to 733 has biased composition (polar residues); that stretch reads TPPASLTTPP. Pro residues-rich tracts occupy residues 781–821 and 829–865; these read ETPP…PALA and PSPPLSPLATPPPQAPPALALPPLQAPPSPPASPPLS. A compositionally biased stretch (low complexity) spans 866-875; it reads PLATPSPQAP. Composition is skewed to pro residues over residues 887 to 917, 926 to 997, and 1004 to 1015; these read FSPPPSPPVQAPFSPPASPPVSPSATPPSQA, LQVP…PPAS, and AKPPPQAPPALA. Low complexity-rich tracts occupy residues 1029–1046, 1137–1146, and 1224–1239; these read FPGQAPFSPSASLPMSPL, DSGPEGGAAA, and GKAAAGAGAGASSRSP. Position 1310 is a phosphoserine (serine 1310).

The protein is Proline-rich protein 36 of Homo sapiens (Human).